A 264-amino-acid polypeptide reads, in one-letter code: MRTYLDLLQHVLDNGTDRGDRTGTGTRSVFGYQMRFNLEEGFPVLTTKKLHLRSIIHELLWFLKGDTNIAYLKENGVSIWDEWADKNGDLGPVYGYQWRSWPAPDGRHIDQIANLLKMLHGNPNSRRLIVSAWNPALVDEMALPPCHCLFQFYVADGKLSCQLYQRSADIFLGVPFNIASYALLTMMIAQVAGLKPGEFIHTLGDAHIYANHFDQARLQLTRIPKKLPTMWINPDVKDLFAFRFEDFQLEGYEADPTIKAPIAV.

R21 is a dUMP binding site. H51 lines the (6R)-5,10-methylene-5,6,7,8-tetrahydrofolate pocket. A dUMP-binding site is contributed by 126–127 (RR). Catalysis depends on C146, which acts as the Nucleophile. DUMP contacts are provided by residues 166–169 (RSAD), N177, and 207–209 (HIY). Residue D169 participates in (6R)-5,10-methylene-5,6,7,8-tetrahydrofolate binding. Residue A263 coordinates (6R)-5,10-methylene-5,6,7,8-tetrahydrofolate.

The protein belongs to the thymidylate synthase family. Bacterial-type ThyA subfamily. As to quaternary structure, homodimer.

It is found in the cytoplasm. The catalysed reaction is dUMP + (6R)-5,10-methylene-5,6,7,8-tetrahydrofolate = 7,8-dihydrofolate + dTMP. It functions in the pathway pyrimidine metabolism; dTTP biosynthesis. In terms of biological role, catalyzes the reductive methylation of 2'-deoxyuridine-5'-monophosphate (dUMP) to 2'-deoxythymidine-5'-monophosphate (dTMP) while utilizing 5,10-methylenetetrahydrofolate (mTHF) as the methyl donor and reductant in the reaction, yielding dihydrofolate (DHF) as a by-product. This enzymatic reaction provides an intracellular de novo source of dTMP, an essential precursor for DNA biosynthesis. The polypeptide is Thymidylate synthase (Brucella anthropi (strain ATCC 49188 / DSM 6882 / CCUG 24695 / JCM 21032 / LMG 3331 / NBRC 15819 / NCTC 12168 / Alc 37) (Ochrobactrum anthropi)).